Consider the following 40-residue polypeptide: Peroxisomal LYS1 stabilizing protein 1 (40 aa).

Over residues 1 to 10 (MTAKTKQSWN) the composition is skewed to polar residues. Residues 1–20 (MTAKTKQSWNKGIWENGKQG) are disordered.

The protein resides in the cytoplasm. It localises to the cytosol. It is found in the peroxisome matrix. Modulates the lysine biosynthesis pathway, possibly by stabilizing the lysine biosynthesis LYS1 protein in lysine-deplete conditions. In Saccharomyces cerevisiae (strain ATCC 204508 / S288c) (Baker's yeast), this protein is Peroxisomal LYS1 stabilizing protein 1.